A 214-amino-acid polypeptide reads, in one-letter code: Probable GTP-binding protein EngB (214 aa).

An EngB-type G domain is found at 22–194; sequence HLPEIAFAGR…WARIDALLEP (173 aa). Residues 30 to 37, 57 to 61, 75 to 78, 142 to 145, and 173 to 175 each bind GTP; these read GRSNVGKS, GRTQL, DLPG, TKCD, and FSA. Mg(2+)-binding residues include Ser-37 and Thr-59. The tract at residues 195 to 214 is disordered; sequence TAAETPGIPEEPAPPGPVND. The segment covering 203-214 has biased composition (pro residues); the sequence is PEEPAPPGPVND.

This sequence belongs to the TRAFAC class TrmE-Era-EngA-EngB-Septin-like GTPase superfamily. EngB GTPase family. Requires Mg(2+) as cofactor.

In terms of biological role, necessary for normal cell division and for the maintenance of normal septation. The sequence is that of Probable GTP-binding protein EngB from Geobacter sp. (strain M21).